The primary structure comprises 360 residues: Peptide chain release factor 1 (360 aa).

At Gln235 the chain carries N5-methylglutamine. A compositionally biased stretch (basic and acidic residues) spans 291–308; the sequence is ASERRNLLGTGDRSDRNR. Positions 291-312 are disordered; that stretch reads ASERRNLLGTGDRSDRNRTYNF.

The protein belongs to the prokaryotic/mitochondrial release factor family. Methylated by PrmC. Methylation increases the termination efficiency of RF1.

The protein resides in the cytoplasm. Its function is as follows. Peptide chain release factor 1 directs the termination of translation in response to the peptide chain termination codons UAG and UAA. The polypeptide is Peptide chain release factor 1 (Yersinia pseudotuberculosis serotype O:1b (strain IP 31758)).